The chain runs to 595 residues: Cyclin-dependent kinase-like 3 (595 aa).

Positions 4-286 (YETLGKVGEG…STDLLRHDYF (283 aa)) constitute a Protein kinase domain. ATP contacts are provided by residues 10–18 (VGEGSYGTV) and Lys33. Positions 45–51 (KIATREI) match the [NKR]KIAxRE motif. Asp125 (proton acceptor) is an active-site residue. Thr158 carries the phosphothreonine modification. Tyr160 bears the Phosphotyrosine mark. 3 disordered regions span residues 362–427 (VIKA…PHAG), 448–513 (SSNL…NKRK), and 551–586 (RESK…GKNL). Residues 368–386 (GKGDVPDQKKPEYEGDHRQ) are compositionally biased toward basic and acidic residues. Positions 387-397 (QGTADDTQPSS) are enriched in polar residues. Residues 448-457 (SSNLSHPNSR) are compositionally biased toward low complexity. Polar residues-rich tracts occupy residues 468–491 (SSQT…QVQT) and 499–509 (RTGQNDQISSG). Over residues 570–585 (NQEKQEGGDGDCEGKN) the composition is skewed to basic and acidic residues.

This sequence belongs to the protein kinase superfamily. CMGC Ser/Thr protein kinase family. CDC2/CDKX subfamily.

The protein localises to the cytoplasm. It catalyses the reaction L-seryl-[protein] + ATP = O-phospho-L-seryl-[protein] + ADP + H(+). The enzyme catalyses L-threonyl-[protein] + ATP = O-phospho-L-threonyl-[protein] + ADP + H(+). The chain is Cyclin-dependent kinase-like 3 from Mus musculus (Mouse).